The primary structure comprises 260 residues: Putative hydro-lyase Bmul_5125/BMULJ_03391 (260 aa).

This sequence belongs to the D-glutamate cyclase family.

This chain is Putative hydro-lyase Bmul_5125/BMULJ_03391, found in Burkholderia multivorans (strain ATCC 17616 / 249).